The primary structure comprises 250 residues: Ribosomal RNA small subunit methyltransferase J (250 aa).

S-adenosyl-L-methionine contacts are provided by residues 101–102, 117–118, 153–154, and D171; these read RD, ER, and SS.

Belongs to the methyltransferase superfamily. RsmJ family.

Its subcellular location is the cytoplasm. The catalysed reaction is guanosine(1516) in 16S rRNA + S-adenosyl-L-methionine = N(2)-methylguanosine(1516) in 16S rRNA + S-adenosyl-L-homocysteine + H(+). Functionally, specifically methylates the guanosine in position 1516 of 16S rRNA. The chain is Ribosomal RNA small subunit methyltransferase J from Shigella boydii serotype 18 (strain CDC 3083-94 / BS512).